Here is a 329-residue protein sequence, read N- to C-terminus: DNA-directed RNA polymerase subunit alpha (329 aa).

The segment at 1-235 is alpha N-terminal domain (alpha-NTD); the sequence is MQGFVEDFLK…QQLEAFVDLR (235 aa). Positions 249 to 329 are alpha C-terminal domain (alpha-CTD); it reads FEPVLLRPVD…NWPPKSLLED (81 aa).

The protein belongs to the RNA polymerase alpha chain family. In terms of assembly, homodimer. The RNAP catalytic core consists of 2 alpha, 1 beta, 1 beta' and 1 omega subunit. When a sigma factor is associated with the core the holoenzyme is formed, which can initiate transcription.

It catalyses the reaction RNA(n) + a ribonucleoside 5'-triphosphate = RNA(n+1) + diphosphate. DNA-dependent RNA polymerase catalyzes the transcription of DNA into RNA using the four ribonucleoside triphosphates as substrates. The chain is DNA-directed RNA polymerase subunit alpha from Buchnera aphidicola subsp. Cinara cedri (strain Cc).